The primary structure comprises 130 residues: Small ribosomal subunit protein uS11 (130 aa).

The protein belongs to the universal ribosomal protein uS11 family. In terms of assembly, part of the 30S ribosomal subunit. Interacts with proteins S7 and S18. Binds to IF-3.

Located on the platform of the 30S subunit, it bridges several disparate RNA helices of the 16S rRNA. Forms part of the Shine-Dalgarno cleft in the 70S ribosome. In Synechococcus sp. (strain WH7803), this protein is Small ribosomal subunit protein uS11.